An 835-amino-acid chain; its full sequence is Leucine--tRNA ligase (835 aa).

A 'HIGH' region motif is present at residues 36–46 (PYPSGKIHVGH). A 'KMSKS' region motif is present at residues 602–606 (KMSKS). K605 serves as a coordination point for ATP.

The protein belongs to the class-I aminoacyl-tRNA synthetase family.

The protein localises to the cytoplasm. The catalysed reaction is tRNA(Leu) + L-leucine + ATP = L-leucyl-tRNA(Leu) + AMP + diphosphate. This chain is Leucine--tRNA ligase, found in Rickettsia peacockii (strain Rustic).